The primary structure comprises 418 residues: Gamma-glutamyl phosphate reductase (418 aa).

This sequence belongs to the gamma-glutamyl phosphate reductase family.

It is found in the cytoplasm. The catalysed reaction is L-glutamate 5-semialdehyde + phosphate + NADP(+) = L-glutamyl 5-phosphate + NADPH + H(+). The protein operates within amino-acid biosynthesis; L-proline biosynthesis; L-glutamate 5-semialdehyde from L-glutamate: step 2/2. Functionally, catalyzes the NADPH-dependent reduction of L-glutamate 5-phosphate into L-glutamate 5-semialdehyde and phosphate. The product spontaneously undergoes cyclization to form 1-pyrroline-5-carboxylate. The polypeptide is Gamma-glutamyl phosphate reductase (Dechloromonas aromatica (strain RCB)).